The chain runs to 123 residues: Small ribosomal subunit protein uS12 (123 aa).

Residues 1 to 32 are disordered; that stretch reads MPTINQLVRHGRKRSVKKTNTPALKASPQKRG. D89 bears the 3-methylthioaspartic acid mark.

The protein belongs to the universal ribosomal protein uS12 family. As to quaternary structure, part of the 30S ribosomal subunit. Contacts proteins S8 and S17. May interact with IF1 in the 30S initiation complex.

Its function is as follows. With S4 and S5 plays an important role in translational accuracy. In terms of biological role, interacts with and stabilizes bases of the 16S rRNA that are involved in tRNA selection in the A site and with the mRNA backbone. Located at the interface of the 30S and 50S subunits, it traverses the body of the 30S subunit contacting proteins on the other side and probably holding the rRNA structure together. The combined cluster of proteins S8, S12 and S17 appears to hold together the shoulder and platform of the 30S subunit. This chain is Small ribosomal subunit protein uS12, found in Desulfatibacillum aliphaticivorans.